The chain runs to 161 residues: Large ribosomal subunit protein bL17 (161 aa).

Basic and acidic residues predominate over residues 132 to 144 (ARAKRAEDNRKAL). The disordered stretch occupies residues 132-161 (ARAKRAEDNRKALEAQQAQAEAETTGETKA). The segment covering 145 to 161 (EAQQAQAEAETTGETKA) has biased composition (low complexity).

The protein belongs to the bacterial ribosomal protein bL17 family. In terms of assembly, part of the 50S ribosomal subunit. Contacts protein L32.

This chain is Large ribosomal subunit protein bL17, found in Koribacter versatilis (strain Ellin345).